Consider the following 470-residue polypeptide: 3-isopropylmalate dehydratase large subunit (470 aa).

Residues Cys348, Cys409, and Cys412 each contribute to the [4Fe-4S] cluster site.

Belongs to the aconitase/IPM isomerase family. LeuC type 1 subfamily. In terms of assembly, heterodimer of LeuC and LeuD. The cofactor is [4Fe-4S] cluster.

It catalyses the reaction (2R,3S)-3-isopropylmalate = (2S)-2-isopropylmalate. It functions in the pathway amino-acid biosynthesis; L-leucine biosynthesis; L-leucine from 3-methyl-2-oxobutanoate: step 2/4. Functionally, catalyzes the isomerization between 2-isopropylmalate and 3-isopropylmalate, via the formation of 2-isopropylmaleate. The protein is 3-isopropylmalate dehydratase large subunit of Thioalkalivibrio sulfidiphilus (strain HL-EbGR7).